A 953-amino-acid chain; its full sequence is Lysosomal alpha-glucosidase (953 aa).

An N-terminal signal peptide occupies residues 1–27; that stretch reads MNIRKPLCSNSVVGACTLISLTTAVIL. Residues 28-69 constitute a propeptide that is removed on maturation; sequence GHLMLRELMLLPQDLHESSSGLWKTYRPHHQEGYKPGPLHIQ. The P-type domain occupies 80–131; the sequence is TQCDVPPSSRFDCAPDKGISQEQCEARGCCYVPAGQVLKEPQIGQPWCFFPP. Disulfide bonds link C82–C109, C92–C108, and C103–C127. Residues N140, N233, and N390 are each glycosylated (N-linked (GlcNAc...) asparagine). A substrate-binding site is contributed by D404. N-linked (GlcNAc...) asparagine glycosylation occurs at N470. The active-site Nucleophile is D518. E521 is an active-site residue. C533 and C558 are disulfide-bonded. Substrate contacts are provided by R600 and D616. A disulfide bond links C647 and C658. Substrate is bound at residue H674. 3 N-linked (GlcNAc...) asparagine glycosylation sites follow: N883, N926, and N933.

Belongs to the glycosyl hydrolase 31 family.

It is found in the lysosome. Its subcellular location is the lysosome membrane. It catalyses the reaction Hydrolysis of terminal, non-reducing (1-&gt;4)-linked alpha-D-glucose residues with release of alpha-D-glucose.. In terms of biological role, essential for the degradation of glycogen in lysosomes. Has highest activity on alpha-1,4-linked glycosidic linkages, but can also hydrolyze alpha-1,6-linked glucans. The chain is Lysosomal alpha-glucosidase (Gaa) from Mus musculus (Mouse).